We begin with the raw amino-acid sequence, 158 residues long: Large ribosomal subunit protein uL16 (158 aa).

Belongs to the universal ribosomal protein uL16 family. Part of the 50S ribosomal subunit.

Functionally, binds 23S rRNA and is also seen to make contacts with the A and possibly P site tRNAs. The chain is Large ribosomal subunit protein uL16 from Prochlorococcus marinus (strain MIT 9303).